The chain runs to 309 residues: Probable manganese-dependent inorganic pyrophosphatase (309 aa).

Residues His9, Asp13, Asp15, Asp75, His97, and Asp149 each contribute to the Mn(2+) site.

The protein belongs to the PPase class C family. Mn(2+) serves as cofactor.

The protein resides in the cytoplasm. The enzyme catalyses diphosphate + H2O = 2 phosphate + H(+). This Staphylococcus epidermidis (strain ATCC 35984 / DSM 28319 / BCRC 17069 / CCUG 31568 / BM 3577 / RP62A) protein is Probable manganese-dependent inorganic pyrophosphatase.